The primary structure comprises 251 residues: Triosephosphate isomerase (251 aa).

9–11 (NWK) serves as a coordination point for substrate. His93 acts as the Electrophile in catalysis. Catalysis depends on Glu163, which acts as the Proton acceptor. Substrate is bound by residues Gly169, Ser209, and 230-231 (GG).

Belongs to the triosephosphate isomerase family. In terms of assembly, homodimer.

It is found in the cytoplasm. It catalyses the reaction D-glyceraldehyde 3-phosphate = dihydroxyacetone phosphate. It participates in carbohydrate biosynthesis; gluconeogenesis. The protein operates within carbohydrate degradation; glycolysis; D-glyceraldehyde 3-phosphate from glycerone phosphate: step 1/1. Involved in the gluconeogenesis. Catalyzes stereospecifically the conversion of dihydroxyacetone phosphate (DHAP) to D-glyceraldehyde-3-phosphate (G3P). The chain is Triosephosphate isomerase from Ruegeria pomeroyi (strain ATCC 700808 / DSM 15171 / DSS-3) (Silicibacter pomeroyi).